A 212-amino-acid polypeptide reads, in one-letter code: Probable GTP-binding protein EngB (212 aa).

Residues 38-210 (SLPEIAFVGK…KASLAKCIKP (173 aa)) form the EngB-type G domain. GTP-binding positions include 46–53 (GKSNVGKS), 73–77 (GRTRQ), 91–94 (DLPG), 158–161 (TKSD), and 189–191 (VSN). Positions 53 and 75 each coordinate Mg(2+).

The protein belongs to the TRAFAC class TrmE-Era-EngA-EngB-Septin-like GTPase superfamily. EngB GTPase family. It depends on Mg(2+) as a cofactor.

Necessary for normal cell division and for the maintenance of normal septation. This Rickettsia conorii (strain ATCC VR-613 / Malish 7) protein is Probable GTP-binding protein EngB.